The following is a 73-amino-acid chain: Translation initiation factor IF-1 (73 aa).

An S1-like domain is found at 1–73 (MAKKDGVIEI…TRGRIVYRYK (73 aa)).

This sequence belongs to the IF-1 family. In terms of assembly, component of the 30S ribosomal translation pre-initiation complex which assembles on the 30S ribosome in the order IF-2 and IF-3, IF-1 and N-formylmethionyl-tRNA(fMet); mRNA recruitment can occur at any time during PIC assembly.

The protein resides in the cytoplasm. Functionally, one of the essential components for the initiation of protein synthesis. Stabilizes the binding of IF-2 and IF-3 on the 30S subunit to which N-formylmethionyl-tRNA(fMet) subsequently binds. Helps modulate mRNA selection, yielding the 30S pre-initiation complex (PIC). Upon addition of the 50S ribosomal subunit IF-1, IF-2 and IF-3 are released leaving the mature 70S translation initiation complex. The polypeptide is Translation initiation factor IF-1 (Paenarthrobacter aurescens (strain TC1)).